Reading from the N-terminus, the 460-residue chain is Protein btn1 (460 aa).

Transmembrane regions (helical) follow at residues 42 to 62, 76 to 96, 105 to 125, 135 to 155, 164 to 184, 195 to 215, 287 to 307, 323 to 343, 356 to 376, 378 to 398, and 428 to 448; these read VCVAFWLFGLINNVLYVVILS, VVLLADVIPSFATKLIAPYFI, IIIFVFLSAAGMLLVALSPPY, LAGIVLASLSSGGGELSFVGL, LAAWGSGTGAAGLVGAGAYAL, ATLLASSCLPAVMVVSFFMVL, GLFFPFMLPLLLVYVAEYTIN, FAHFRAFYPAYNAIYQVGVFI, LYLPSFLQILNLVLLTLQAVF, FIPSVYIIFIIIFWEGLLGGL, and AAGICIAGFVSMVFEVWLCDW.

The protein belongs to the battenin family.

It is found in the vacuole membrane. Functionally, involved in vacuolar transport and vacuole pH homeostasis. Also required for cytokinesis. The sequence is that of Protein btn1 (btn1) from Aspergillus fumigatus (strain ATCC MYA-4609 / CBS 101355 / FGSC A1100 / Af293) (Neosartorya fumigata).